Consider the following 72-residue polypeptide: Translation initiation factor IF-1 (72 aa).

Residues 1–72 form the S1-like domain; sequence MAKDNVIEIE…SKGRITYRFK (72 aa).

The protein belongs to the IF-1 family. In terms of assembly, component of the 30S ribosomal translation pre-initiation complex which assembles on the 30S ribosome in the order IF-2 and IF-3, IF-1 and N-formylmethionyl-tRNA(fMet); mRNA recruitment can occur at any time during PIC assembly.

The protein localises to the cytoplasm. Functionally, one of the essential components for the initiation of protein synthesis. Stabilizes the binding of IF-2 and IF-3 on the 30S subunit to which N-formylmethionyl-tRNA(fMet) subsequently binds. Helps modulate mRNA selection, yielding the 30S pre-initiation complex (PIC). Upon addition of the 50S ribosomal subunit IF-1, IF-2 and IF-3 are released leaving the mature 70S translation initiation complex. This is Translation initiation factor IF-1 from Pediococcus pentosaceus (strain ATCC 25745 / CCUG 21536 / LMG 10740 / 183-1w).